A 362-amino-acid polypeptide reads, in one-letter code: MSTTLLSAFYDIDLLYKNEKVLNNLALSTMLDKKAVGSPVSSTNSNLFPGFLRRHSASNLQALSGNTNPAKFCPNNNQLKEPAAGSTALLNRENKFRDRSFSENGERSQHLLHLQQQQQQKAGAQVNSTRYKTELCRPFEESGACKYGEKCQFAHGFHELRSLTRHPKYKTELCRTFHTIGFCPYGPRCHFIHNAEERRQAPGAGERPKLHHSLSFSGFPNHSLDSPLLESPTSRTPPPQSSSSLYCQELLQLNNNNNPCANNAFTFSGQELGLIAPLAIHTQNPPYCRQPSSSPPLSFQPLRRVSESPVFDAPPSPPDSLSDRDSYLSGSLSSGSLSGSDSPTLDSNRRLPIFSRLSISDD.

Residues 100–109 (SFSENGERSQ) show a composition bias toward basic and acidic residues. Residues 100 to 126 (SFSENGERSQHLLHLQQQQQQKAGAQV) are disordered. A compositionally biased stretch (low complexity) spans 111–120 (LLHLQQQQQQ). An RNA-binding motif is present at residues 130-135 (RYKTEL). 2 consecutive C3H1-type zinc fingers follow at residues 130 to 158 (RYKT…HGFH) and 168 to 196 (KYKT…HNAE). The interval 147–188 (YGEKCQFAHGFHELRSLTRHPKYKTELCRTFHTIGFCPYGPR) is RNA-binding. 2 disordered regions span residues 225–244 (DSPL…SSSS) and 306–362 (SESP…ISDD). The span at 327-346 (YLSGSLSSGSLSGSDSPTLD) shows a compositional bias: low complexity.

In terms of processing, phosphorylated.

The protein resides in the nucleus. Its subcellular location is the cytoplasm. Its function is as follows. Zinc-finger RNA-binding protein that destabilizes several cytoplasmic AU-rich element (ARE)-containing mRNA transcripts by promoting their poly(A) tail removal or deadenylation, and hence provide a mechanism for attenuating protein synthesis. Acts as a 3'-untranslated region (UTR) ARE mRNA-binding adapter protein to communicate signaling events to the mRNA decay machinery. Functions by recruiting the CCR4-NOT deadenylase complex and probably other components of the cytoplasmic RNA decay machinery to the bound ARE-containing mRNAs, and hence promotes ARE-mediated mRNA deadenylation and decay processes. Binds to 3'-UTR ARE of numerous mRNAs. Also induces the degradation of ARE-containing mRNAs even in absence of poly(A) tail. Required for tubulogenesis during pronephros development. This is mRNA decay activator protein ZFP36L2 (zfp36l2) from Xenopus tropicalis (Western clawed frog).